The following is a 70-amino-acid chain: MSKEKKFEENLADLEVIVQKLENGDVALEEAIAEFQKGMKLSKELQASLDKAEKTLVKVMQEDGTETEME.

This sequence belongs to the XseB family. As to quaternary structure, heterooligomer composed of large and small subunits.

It localises to the cytoplasm. It catalyses the reaction Exonucleolytic cleavage in either 5'- to 3'- or 3'- to 5'-direction to yield nucleoside 5'-phosphates.. Bidirectionally degrades single-stranded DNA into large acid-insoluble oligonucleotides, which are then degraded further into small acid-soluble oligonucleotides. The polypeptide is Exodeoxyribonuclease 7 small subunit (Streptococcus gordonii (strain Challis / ATCC 35105 / BCRC 15272 / CH1 / DL1 / V288)).